A 231-amino-acid chain; its full sequence is Aspartate/glutamate leucyltransferase (231 aa).

This sequence belongs to the R-transferase family. Bpt subfamily.

The protein localises to the cytoplasm. It carries out the reaction N-terminal L-glutamyl-[protein] + L-leucyl-tRNA(Leu) = N-terminal L-leucyl-L-glutamyl-[protein] + tRNA(Leu) + H(+). It catalyses the reaction N-terminal L-aspartyl-[protein] + L-leucyl-tRNA(Leu) = N-terminal L-leucyl-L-aspartyl-[protein] + tRNA(Leu) + H(+). Functionally, functions in the N-end rule pathway of protein degradation where it conjugates Leu from its aminoacyl-tRNA to the N-termini of proteins containing an N-terminal aspartate or glutamate. In Pseudoalteromonas atlantica (strain T6c / ATCC BAA-1087), this protein is Aspartate/glutamate leucyltransferase.